A 400-amino-acid polypeptide reads, in one-letter code: Spermatogenic leucine zipper protein 1 (400 aa).

The tract at residues 1–27 (MADSDSSSEMPAHSPSPSPIPCAKQKP) is disordered. Ser-106 carries the post-translational modification Phosphoserine. The helix-loop-helix motif stretch occupies residues 116-127 (RNKLRFKDDLFI). The tract at residues 128-193 (HFDPERENTM…HIRGEYRKLR (66 aa)) is basic motif. 2 coiled-coil regions span residues 182–231 (SVHI…KDIV) and 268–293 (LIAALLENECQILQQRVDILRELHLH). Residue Ser-207 is modified to Phosphoserine. The interval 252 to 273 (LEEQVKKLSQDTHSLHLIAALL) is leucine-zipper. The disordered stretch occupies residues 295-332 (AGPGHEKPLQTSGEQDKKCGEQDKKCGEQDKKCGEQDK).

As to quaternary structure, interacts with PPP1CC isoform gamma-2. Phosphorylated by MAPK1/ERK2 and MAPK3/ERK1.

The protein localises to the cytoplasm. The protein resides in the nucleus. In terms of biological role, transcription factor that binds to the DNA sequence 5'-CANNTG-3'(E box) and the G-box motif. May play an important role in the regulation of cell proliferation and differentiation during spermatogenesis. This is Spermatogenic leucine zipper protein 1 (Spz1) from Rattus norvegicus (Rat).